A 392-amino-acid chain; its full sequence is MPEGFQSLNQTLPSAISSIAHLESLNDSFILGAKQSEDVSPGLEILALISVTYAVIISVGILGNTILIKVFFKIKSMQTVPNIFITSLAFGDLLLLLTCVPVDASRYIVDTWMFGRAGCKIISFIQLTSVGVSVFTLTVLSADRYRAIVKPLQLQTSDAVLKTCGKAVCVWIISMLLAAPEAVFSDLYEFGSSEKNTTFEACAPYPVSEKILQETHSLICFLVFYIVPLSIISAYYFLIAKTLYKSTFNMPAEEHTHARKQIESRKRVAKTVLVLVALFAVCWLPNHMLYLYRSFTYHSAVNSSAFHLSATIFARVLAFSNSCVNPFALYWLSRSFRQHFKKQVYCCKTEPPASQQSPTHSSTITGITAVKGNIQMSEISITLLSAYDVKKE.

Residues 1–40 (MPEGFQSLNQTLPSAISSIAHLESLNDSFILGAKQSEDVS) lie on the Extracellular side of the membrane. Residues asparagine 9 and asparagine 26 are each glycosylated (N-linked (GlcNAc...) asparagine). Residues 41–62 (PGLEILALISVTYAVIISVGIL) traverse the membrane as a helical segment. Topologically, residues 63–81 (GNTILIKVFFKIKSMQTVP) are cytoplasmic. A helical membrane pass occupies residues 82–102 (NIFITSLAFGDLLLLLTCVPV). The Extracellular segment spans residues 103–120 (DASRYIVDTWMFGRAGCK). Cysteines 119 and 202 form a disulfide. The helical transmembrane segment at 121-142 (IISFIQLTSVGVSVFTLTVLSA) threads the bilayer. The Cytoplasmic portion of the chain corresponds to 143-162 (DRYRAIVKPLQLQTSDAVLK). A helical membrane pass occupies residues 163–183 (TCGKAVCVWIISMLLAAPEAV). Residues 184–219 (FSDLYEFGSSEKNTTFEACAPYPVSEKILQETHSLI) lie on the Extracellular side of the membrane. Residues 220–240 (CFLVFYIVPLSIISAYYFLIA) traverse the membrane as a helical segment. At 241–271 (KTLYKSTFNMPAEEHTHARKQIESRKRVAKT) the chain is on the cytoplasmic side. A helical membrane pass occupies residues 272-292 (VLVLVALFAVCWLPNHMLYLY). Residues 293–312 (RSFTYHSAVNSSAFHLSATI) are Extracellular-facing. A helical membrane pass occupies residues 313–332 (FARVLAFSNSCVNPFALYWL). The Cytoplasmic portion of the chain corresponds to 333 to 392 (SRSFRQHFKKQVYCCKTEPPASQQSPTHSSTITGITAVKGNIQMSEISITLLSAYDVKKE). Residue cysteine 346 is the site of S-palmitoyl cysteine attachment.

Belongs to the G-protein coupled receptor 1 family. In terms of tissue distribution, expressed only in brain, primarily in cortex and forebrain and at low levels in the midbrain.

Its subcellular location is the cell membrane. Functionally, the relative rank potency of bombesin-like peptides for this receptor is [Phe13]bombesin &gt; [Leu13]bombesin &gt; GRP &gt; neuromedin-B. The chain is [Phe13]-bombesin receptor (BB4) from Bombina orientalis (Oriental fire-bellied toad).